We begin with the raw amino-acid sequence, 309 residues long: tRNA dimethylallyltransferase (309 aa).

Residue 8 to 15 (GPTATGKS) coordinates ATP. 10–15 (TATGKS) contacts substrate. Residues 33–36 (DSRQ) form an interaction with substrate tRNA region.

This sequence belongs to the IPP transferase family. In terms of assembly, monomer. Requires Mg(2+) as cofactor.

The enzyme catalyses adenosine(37) in tRNA + dimethylallyl diphosphate = N(6)-dimethylallyladenosine(37) in tRNA + diphosphate. Functionally, catalyzes the transfer of a dimethylallyl group onto the adenine at position 37 in tRNAs that read codons beginning with uridine, leading to the formation of N6-(dimethylallyl)adenosine (i(6)A). In Trichodesmium erythraeum (strain IMS101), this protein is tRNA dimethylallyltransferase.